Here is a 300-residue protein sequence, read N- to C-terminus: C-5 sterol desaturase (300 aa).

Transmembrane regions (helical) follow at residues 3–23 (DPVLFAIPCFLLLLILEWTAA), 68–88 (SLALLGYAAIYAYLAPWQLSA), 91–111 (WYTWVIAIVGVDLLYYSYHRI), and 147–167 (ILMWVPLPLMGLPPWMVFCSW). The Fatty acid hydroxylase domain maps to 94–227 (WVIAIVGVDL…LIIWDRLFGS (134 aa)).

Belongs to the sterol desaturase family.

It localises to the cell membrane. The sequence is that of C-5 sterol desaturase (erg3) from Mycobacterium bovis (strain ATCC BAA-935 / AF2122/97).